Reading from the N-terminus, the 308-residue chain is tRNA dimethylallyltransferase (308 aa).

An ATP-binding site is contributed by 14–21; sequence GPTASGKT. 16 to 21 contacts substrate; it reads TASGKT. 3 interaction with substrate tRNA regions span residues 39–42, 163–167, and 244–249; these read DSAL, QRLSR, and RCVGYR.

It belongs to the IPP transferase family. As to quaternary structure, monomer. Requires Mg(2+) as cofactor.

The catalysed reaction is adenosine(37) in tRNA + dimethylallyl diphosphate = N(6)-dimethylallyladenosine(37) in tRNA + diphosphate. In terms of biological role, catalyzes the transfer of a dimethylallyl group onto the adenine at position 37 in tRNAs that read codons beginning with uridine, leading to the formation of N6-(dimethylallyl)adenosine (i(6)A). This Shewanella baltica (strain OS185) protein is tRNA dimethylallyltransferase.